Reading from the N-terminus, the 416-residue chain is PDZ and LIM domain protein 7 (416 aa).

Residues 1 to 85 enclose the PDZ domain; the sequence is MESYKVMLNG…RLCLTLSRAQ (85 aa). 2 disordered regions span residues 145-191 and 202-221; these read CTPQ…AVDP and TSTVLSKHSQPATPTPMQNR. Over residues 168 to 181 the composition is skewed to low complexity; the sequence is PGLAPRTPAATPGP. LIM zinc-binding domains are found at residues 239-297, 298-357, and 358-416; these read PLCY…TRYA, PSCA…MFGT, and KCRG…FSHV.

In terms of assembly, interacts with various PKC isoforms through the LIM zinc-binding domains. Interacts with TPM2. Interacts with TBX4 and TBX5.

It localises to the cytoplasm. The protein resides in the cytoskeleton. It is found in the myofibril. Its subcellular location is the sarcomere. The protein localises to the z line. Functionally, may function as a scaffold on which the coordinated assembly of proteins can occur. May play a role as an adapter that, via its PDZ domain, localizes LIM-binding proteins to actin filaments of both skeletal muscle and nonmuscle tissues. May be involved in bone formation. The sequence is that of PDZ and LIM domain protein 7 (PDLIM7) from Gallus gallus (Chicken).